Consider the following 488-residue polypeptide: Glutamyl-tRNA(Gln) amidotransferase subunit A (488 aa).

Active-site charge relay system residues include Lys-77 and Ser-152. The active-site Acyl-ester intermediate is the Ser-176.

The protein belongs to the amidase family. GatA subfamily. In terms of assembly, heterotrimer of A, B and C subunits.

The enzyme catalyses L-glutamyl-tRNA(Gln) + L-glutamine + ATP + H2O = L-glutaminyl-tRNA(Gln) + L-glutamate + ADP + phosphate + H(+). Its function is as follows. Allows the formation of correctly charged Gln-tRNA(Gln) through the transamidation of misacylated Glu-tRNA(Gln) in organisms which lack glutaminyl-tRNA synthetase. The reaction takes place in the presence of glutamine and ATP through an activated gamma-phospho-Glu-tRNA(Gln). The polypeptide is Glutamyl-tRNA(Gln) amidotransferase subunit A (Streptococcus agalactiae serotype III (strain NEM316)).